We begin with the raw amino-acid sequence, 82 residues long: Large ribosomal subunit protein bL31B (82 aa).

This sequence belongs to the bacterial ribosomal protein bL31 family. Type B subfamily. As to quaternary structure, part of the 50S ribosomal subunit.

The chain is Large ribosomal subunit protein bL31B from Amoebophilus asiaticus (strain 5a2).